The chain runs to 449 residues: Xaa-Pro dipeptidase (449 aa).

5 residues coordinate Mn(2+): D246, D257, H345, E390, and E429.

It belongs to the peptidase M24B family. Bacterial-type prolidase subfamily. The cofactor is Mn(2+).

It carries out the reaction Xaa-L-Pro dipeptide + H2O = an L-alpha-amino acid + L-proline. Splits dipeptides with a prolyl residue in the C-terminal position. This chain is Xaa-Pro dipeptidase, found in Yersinia enterocolitica serotype O:8 / biotype 1B (strain NCTC 13174 / 8081).